Reading from the N-terminus, the 585-residue chain is Cyclic nucleotide-binding domain-containing protein 2 (585 aa).

A nucleoside 3',5'-cyclic phosphate is bound at residue 116 to 239 (SYRNYAEPLQ…DAQYRFEFFR (124 aa)).

It localises to the cytoplasm. It is found in the cytosol. Its function is as follows. Essential for male fertility. Plays an important role in spermatogenesis and regulates sperm motility by controlling the development of the flagellar bending of sperm. The chain is Cyclic nucleotide-binding domain-containing protein 2 (CNBD2) from Macaca fascicularis (Crab-eating macaque).